The primary structure comprises 264 residues: Diphthine synthase (264 aa).

Residues L9, D84, V87, 112–113, L164, A207, and H232 contribute to the S-adenosyl-L-methionine site; that span reads SI.

It belongs to the diphthine synthase family. Homodimer.

It carries out the reaction 2-[(3S)-amino-3-carboxypropyl]-L-histidyl-[translation elongation factor 2] + 3 S-adenosyl-L-methionine = diphthine-[translation elongation factor 2] + 3 S-adenosyl-L-homocysteine + 3 H(+). Its pathway is protein modification; peptidyl-diphthamide biosynthesis. Functionally, S-adenosyl-L-methionine-dependent methyltransferase that catalyzes the trimethylation of the amino group of the modified target histidine residue in translation elongation factor 2 (EF-2), to form an intermediate called diphthine. The three successive methylation reactions represent the second step of diphthamide biosynthesis. The chain is Diphthine synthase from Methanothermobacter thermautotrophicus (strain ATCC 29096 / DSM 1053 / JCM 10044 / NBRC 100330 / Delta H) (Methanobacterium thermoautotrophicum).